The following is a 531-amino-acid chain: UDP-glucuronosyltransferase 2B13 (531 aa).

The first 24 residues, 1-24 (MPVKCISVLLLLLQLSCCFSSGSC), serve as a signal peptide directing secretion. 3 N-linked (GlcNAc...) asparagine glycosylation sites follow: Asn-69, Asn-101, and Asn-317. Residues 495–511 (VIGFLLACVAITTYLIV) form a helical membrane-spanning segment.

Belongs to the UDP-glycosyltransferase family.

The protein resides in the microsome membrane. It localises to the endoplasmic reticulum membrane. The enzyme catalyses glucuronate acceptor + UDP-alpha-D-glucuronate = acceptor beta-D-glucuronoside + UDP + H(+). In terms of biological role, UDPGT is of major importance in the conjugation and subsequent elimination of potentially toxic xenobiotics and endogenous compounds. Acts on small phenolic agents such as 2-beta-naphthol and 4-methylumbelliferone as well as bulky phenolic compounds like 2-hydroxy- and 4-hydroxybiphenyl. In contrast to 2B16 it is active toward octylgallate. The protein is UDP-glucuronosyltransferase 2B13 (UGT2B13) of Oryctolagus cuniculus (Rabbit).